The following is a 318-amino-acid chain: Acetyl-coenzyme A carboxylase carboxyl transferase subunit alpha (318 aa).

In terms of domain architecture, CoA carboxyltransferase C-terminal spans Asp-31–Ala-292.

The protein belongs to the AccA family. As to quaternary structure, acetyl-CoA carboxylase is a heterohexamer composed of biotin carboxyl carrier protein (AccB), biotin carboxylase (AccC) and two subunits each of ACCase subunit alpha (AccA) and ACCase subunit beta (AccD).

It is found in the cytoplasm. The catalysed reaction is N(6)-carboxybiotinyl-L-lysyl-[protein] + acetyl-CoA = N(6)-biotinyl-L-lysyl-[protein] + malonyl-CoA. It participates in lipid metabolism; malonyl-CoA biosynthesis; malonyl-CoA from acetyl-CoA: step 1/1. Functionally, component of the acetyl coenzyme A carboxylase (ACC) complex. First, biotin carboxylase catalyzes the carboxylation of biotin on its carrier protein (BCCP) and then the CO(2) group is transferred by the carboxyltransferase to acetyl-CoA to form malonyl-CoA. The sequence is that of Acetyl-coenzyme A carboxylase carboxyl transferase subunit alpha from Listeria monocytogenes serotype 4a (strain HCC23).